We begin with the raw amino-acid sequence, 335 residues long: MAAAPWYIRQRDTDLLGKFKFIQNQEDGRLREATNGTVNSRWSLGVSIEPRNDARNRYVNIMPYERNRVHLKTLSGNDYINASYVKVNVPGQSIEPGYYIATQGPTRKTWDQFWQMCYHNCPLDNIVIVMVTPLVEYNREKCYQYWPRGGVDDTVRIASKWESPGGANDMTQFPSDLKIEFVNVHKVKDYYTVTDIKLTPTDPLVGPVKTVHHFYFDLWKDMNKPEEVVPIMELCAHSHSLNSRGNPIIVHCSAGVGRTGTFIALDHLMHDTLDFKNITERSRHSDRATEEYTRDLIEQIVLQLRSQRMKMVQTKDQFLFIYHAAKYLNSLSVNQ.

In terms of domain architecture, Tyrosine-protein phosphatase spans Leu15–Leu328. Ser83 bears the Phosphoserine; by CLK1 mark. Residue Cys252 is the Phosphocysteine intermediate of the active site.

It belongs to the protein-tyrosine phosphatase family. Non-receptor class subfamily. Post-translationally, activated by phosphorylation at Ser-83.

The protein resides in the cytoplasm. It catalyses the reaction O-phospho-L-tyrosyl-[protein] + H2O = L-tyrosyl-[protein] + phosphate. Is not required for vegetative growth. This Saccharomyces cerevisiae (strain ATCC 204508 / S288c) (Baker's yeast) protein is Tyrosine-protein phosphatase 1 (PTP1).